Consider the following 449-residue polypeptide: Trigger factor (449 aa).

In terms of domain architecture, PPIase FKBP-type spans Gly162 to Pro243. A compositionally biased stretch (basic and acidic residues) spans Gly428–Phe437. The interval Gly428–Ala449 is disordered. Residues Gly438–Ala449 are compositionally biased toward acidic residues.

The protein belongs to the FKBP-type PPIase family. Tig subfamily.

Its subcellular location is the cytoplasm. It catalyses the reaction [protein]-peptidylproline (omega=180) = [protein]-peptidylproline (omega=0). Involved in protein export. Acts as a chaperone by maintaining the newly synthesized protein in an open conformation. Functions as a peptidyl-prolyl cis-trans isomerase. The sequence is that of Trigger factor from Corynebacterium glutamicum (strain R).